Consider the following 558-residue polypeptide: DEAD-box ATP-dependent RNA helicase 49 (558 aa).

The Q motif signature appears at 16–44; sequence FSELKPPLSEDIIEALDRSGFEVCTPVQA. The Helicase ATP-binding domain occupies 47-226; it reads IPFLCSHKDV…KAGLRNAMEV (180 aa). An ATP-binding site is contributed by 60 to 67; it reads AATGSGKT. Positions 174-177 match the DEAD box motif; that stretch reads DEAD. The 148-residue stretch at 255–402 folds into the Helicase C-terminal domain; sequence QLVHLLIENK…ERKCSENASD (148 aa). Positions 506 to 558 are disordered; sequence KDKLQQEKRGKRKKSSKEAVDDSNKASRKRKLTGRQRQTIQTAQDEEEMNLRL. A compositionally biased stretch (basic and acidic residues) spans 521-530; sequence SKEAVDDSNK. Residues 549-558 are compositionally biased toward acidic residues; that stretch reads QDEEEMNLRL.

It belongs to the DEAD box helicase family. DDX55/SPB4 subfamily.

The catalysed reaction is ATP + H2O = ADP + phosphate + H(+). This is DEAD-box ATP-dependent RNA helicase 49 (RH49) from Arabidopsis thaliana (Mouse-ear cress).